The primary structure comprises 156 residues: Ribosomal RNA large subunit methyltransferase H (156 aa).

Residues leucine 72, glycine 104, and 123-128 (FGAMVW) each bind S-adenosyl-L-methionine.

This sequence belongs to the RNA methyltransferase RlmH family. In terms of assembly, homodimer.

The protein localises to the cytoplasm. The enzyme catalyses pseudouridine(1915) in 23S rRNA + S-adenosyl-L-methionine = N(3)-methylpseudouridine(1915) in 23S rRNA + S-adenosyl-L-homocysteine + H(+). Its function is as follows. Specifically methylates the pseudouridine at position 1915 (m3Psi1915) in 23S rRNA. This chain is Ribosomal RNA large subunit methyltransferase H, found in Dinoroseobacter shibae (strain DSM 16493 / NCIMB 14021 / DFL 12).